The chain runs to 392 residues: Erythronate-4-phosphate dehydrogenase (392 aa).

Residues serine 48 and threonine 69 each contribute to the substrate site. Position 149 (aspartate 149) interacts with NAD(+). The active site involves arginine 215. Aspartate 239 contributes to the NAD(+) binding site. Residue glutamate 244 is part of the active site. Histidine 261 (proton donor) is an active-site residue. Residue glycine 264 coordinates NAD(+). Tyrosine 265 contributes to the substrate binding site.

Belongs to the D-isomer specific 2-hydroxyacid dehydrogenase family. PdxB subfamily. As to quaternary structure, homodimer.

The protein resides in the cytoplasm. The catalysed reaction is 4-phospho-D-erythronate + NAD(+) = (R)-3-hydroxy-2-oxo-4-phosphooxybutanoate + NADH + H(+). It participates in cofactor biosynthesis; pyridoxine 5'-phosphate biosynthesis; pyridoxine 5'-phosphate from D-erythrose 4-phosphate: step 2/5. Catalyzes the oxidation of erythronate-4-phosphate to 3-hydroxy-2-oxo-4-phosphonooxybutanoate. This Salinibacter ruber (strain DSM 13855 / M31) protein is Erythronate-4-phosphate dehydrogenase.